Reading from the N-terminus, the 487-residue chain is Glutamyl-tRNA(Gln) amidotransferase subunit A (487 aa).

Residues K79 and S154 each act as charge relay system in the active site. S178 serves as the catalytic Acyl-ester intermediate.

It belongs to the amidase family. GatA subfamily. As to quaternary structure, heterotrimer of A, B and C subunits.

The catalysed reaction is L-glutamyl-tRNA(Gln) + L-glutamine + ATP + H2O = L-glutaminyl-tRNA(Gln) + L-glutamate + ADP + phosphate + H(+). Allows the formation of correctly charged Gln-tRNA(Gln) through the transamidation of misacylated Glu-tRNA(Gln) in organisms which lack glutaminyl-tRNA synthetase. The reaction takes place in the presence of glutamine and ATP through an activated gamma-phospho-Glu-tRNA(Gln). The sequence is that of Glutamyl-tRNA(Gln) amidotransferase subunit A from Moorella thermoacetica (strain ATCC 39073 / JCM 9320).